Consider the following 327-residue polypeptide: GMP reductase (327 aa).

The Thioimidate intermediate role is filled by Cys-176. 205 to 228 contacts NADP(+); the sequence is IIADGGIRTHGDIAKSIRFGASMV.

This sequence belongs to the IMPDH/GMPR family. GuaC type 2 subfamily.

The catalysed reaction is IMP + NH4(+) + NADP(+) = GMP + NADPH + 2 H(+). Functionally, catalyzes the irreversible NADPH-dependent deamination of GMP to IMP. It functions in the conversion of nucleobase, nucleoside and nucleotide derivatives of G to A nucleotides, and in maintaining the intracellular balance of A and G nucleotides. The chain is GMP reductase from Streptococcus pyogenes serotype M49 (strain NZ131).